Here is a 266-residue protein sequence, read N- to C-terminus: Apolipoprotein A-I (266 aa).

Positions 1 to 18 (MKAVVLTLAVLFLTGSQA) are cleaved as a signal peptide. A run of 2 repeats spans residues 67-88 (LKLLDNWDSLSSTVAKLREQIG) and 89-110 (PVTQEFWDNLEKETEVLRQEMS). The segment at 67-266 (LKLLDNWDSL…DEATKKLNSQ (200 aa)) is 10 X approximate tandem repeats. Met-109 is modified (methionine sulfoxide). The 3; half-length repeat unit spans residues 111–121 (KDLEEVKKKVQ). Repeat copies occupy residues 122–143 (PYLDEFQSKWHEEVELYRQKVA), 144–165 (PLGAELREGARQKLQELQEKLS), 166–187 (PLAEELRDRARAHVDALRAQLA), 188–209 (PYSEQLRERLAARLQALKEGGG), and 210–231 (AALTEYHAKASEHLSALREKAK). A 9; half-length repeat occupies 232–242 (PALEDLRQGLL). Repeat unit 10 spans residues 243 to 266 (PVLENFRVSLLAAVDEATKKLNSQ).

Belongs to the apolipoprotein A1/A4/E family. In terms of assembly, homodimer. Interacts with APOA1BP and CLU. Component of a sperm activating protein complex (SPAP), consisting of APOA1, an immunoglobulin heavy chain, an immunoglobulin light chain and albumin. Interacts with NDRG1. Interacts with SCGB3A2. Interacts with NAXE and YJEFN3. Glycosylated. Post-translationally, palmitoylated. In terms of processing, phosphorylation sites are present in the extracellular medium.

Its subcellular location is the secreted. Its function is as follows. Participates in the reverse transport of cholesterol from tissues to the liver for excretion by promoting cholesterol efflux from tissues and by acting as a cofactor for the lecithin cholesterol acyltransferase (LCAT). As part of the SPAP complex, activates spermatozoa motility. The protein is Apolipoprotein A-I (APOA1) of Mirounga angustirostris (Northern elephant seal).